We begin with the raw amino-acid sequence, 221 residues long: Adenylate kinase (221 aa).

An ATP-binding site is contributed by 10-15; sequence GAGKGT. The NMP stretch occupies residues 30–59; that stretch reads STGDMLRAAVKARTELGVAAKKIMDAGGLV. Residues Thr-31, Arg-36, 57 to 59, 85 to 88, and Gln-92 each bind AMP; these read GLV and GFPR. Residues 122–159 are LID; that stretch reads GRRVHLASGRTYHIKFNPPKVEGKDDITGDPLIQRDDD. ATP is bound by residues Arg-123 and 132 to 133; that span reads TY. AMP contacts are provided by Arg-156 and Arg-167. ATP is bound at residue Ser-207.

It belongs to the adenylate kinase family. Monomer.

Its subcellular location is the cytoplasm. The enzyme catalyses AMP + ATP = 2 ADP. The protein operates within purine metabolism; AMP biosynthesis via salvage pathway; AMP from ADP: step 1/1. Its function is as follows. Catalyzes the reversible transfer of the terminal phosphate group between ATP and AMP. Plays an important role in cellular energy homeostasis and in adenine nucleotide metabolism. This chain is Adenylate kinase, found in Polynucleobacter necessarius subsp. necessarius (strain STIR1).